We begin with the raw amino-acid sequence, 231 residues long: Red fluorescent protein eqFP611 (231 aa).

A cross-link (2-iminomethyl-5-imidazolinone (Met-Gly)) is located at residues Met63 to Gly65. (E)-2,3-didehydrotyrosine is present on Tyr64.

It belongs to the GFP family. In terms of assembly, monomer. In terms of processing, contains a chromophore consisting of modified amino acid residues. The chromophore is formed by autocatalytic backbone condensation between Xaa-N and Gly-(N+2), oxidation of Tyr-(N+1) to didehydrotyrosine, and formation of a double bond to the alpha-amino nitrogen of residue Xaa-N. Maturation of the chromophore requires nothing other than molecular oxygen.

In terms of biological role, pigment protein. This chain is Red fluorescent protein eqFP611, found in Entacmaea quadricolor (Bubble-tip anemone).